The chain runs to 146 residues: DNA-binding protein Rv2175c (146 aa).

The tract at residues 1-27 is disordered; it reads MPGRAPGSTLARVGSIPAGDDVLDPDE. The residue at position 9 (Thr-9) is a Phosphothreonine.

In terms of assembly, monomer in solution. May form homodimers. Interacts with phosphorylated PknL. Phosphorylated by PknL. Phosphorylation negatively regulates DNA-binding activity.

Its function is as follows. Binds DNA at low salt concentrations. In Mycobacterium tuberculosis (strain ATCC 25618 / H37Rv), this protein is DNA-binding protein Rv2175c.